The sequence spans 402 residues: Opaque-phase-specific protein OP4 (402 aa).

Positions 1-20 are cleaved as a signal peptide; the sequence is MKFSQATILAIFASSALVSA. N-linked (GlcNAc...) asparagine glycosylation is found at asparagine 140 and asparagine 293. Residues 302-322 are disordered; the sequence is NNAGSSSKPTGTTTASTATAA. Low complexity predominate over residues 304 to 322; sequence AGSSSKPTGTTTASTATAA.

The chain is Opaque-phase-specific protein OP4 (OPS4) from Candida albicans (strain WO-1) (Yeast).